Consider the following 461-residue polypeptide: ATP synthase subunit beta 2 (461 aa).

151–158 is a binding site for ATP; the sequence is GGAGVGKT.

Belongs to the ATPase alpha/beta chains family. F-type ATPases have 2 components, CF(1) - the catalytic core - and CF(0) - the membrane proton channel. CF(1) has five subunits: alpha(3), beta(3), gamma(1), delta(1), epsilon(1). CF(0) has three main subunits: a(1), b(2) and c(9-12). The alpha and beta chains form an alternating ring which encloses part of the gamma chain. CF(1) is attached to CF(0) by a central stalk formed by the gamma and epsilon chains, while a peripheral stalk is formed by the delta and b chains.

The protein localises to the cell inner membrane. The catalysed reaction is ATP + H2O + 4 H(+)(in) = ADP + phosphate + 5 H(+)(out). Produces ATP from ADP in the presence of a proton gradient across the membrane. The catalytic sites are hosted primarily by the beta subunits. The protein is ATP synthase subunit beta 2 of Vibrio campbellii (strain ATCC BAA-1116).